Reading from the N-terminus, the 185-residue chain is Ribosome-recycling factor (185 aa).

A disordered region spans residues 128 to 158 (VRNTRQDANNKVKKLEKDKEISEDESKKAQE).

The protein belongs to the RRF family.

The protein localises to the cytoplasm. Responsible for the release of ribosomes from messenger RNA at the termination of protein biosynthesis. May increase the efficiency of translation by recycling ribosomes from one round of translation to another. In Helicobacter pylori (strain J99 / ATCC 700824) (Campylobacter pylori J99), this protein is Ribosome-recycling factor.